Reading from the N-terminus, the 343-residue chain is ABC transporter riboflavin-binding protein RfuA (343 aa).

The N-terminal stretch at 1-19 is a signal peptide; it reads MNGAVCVLSALIAVFTCFS. Cysteine 20 carries the N-palmitoyl cysteine lipid modification. A lipid anchor (S-diacylglycerol cysteine) is attached at cysteine 20. Riboflavin contacts are provided by residues 43-46, aspartate 124, glutamine 140, tyrosine 176, tryptophan 208, and aspartate 255; that span reads SPVY.

Belongs to the BMP lipoprotein family. In terms of assembly, monomer in solution. The complex is probably composed of two ATP-binding proteins (RfuB), two transmembrane proteins (RfuC and RfuD) and a solute-binding protein (RfuA).

The protein resides in the cell inner membrane. Functionally, probably part of the ABC transporter complex RfuABCD involved in riboflavin import. Binds riboflavin. In Treponema pallidum (strain Nichols), this protein is ABC transporter riboflavin-binding protein RfuA.